The sequence spans 167 residues: CASP-like protein 3 (167 aa).

Residues M1 to K2 are Cytoplasmic-facing. The chain crosses the membrane as a helical span at residues I3–M23. Residues A24–N48 lie on the Extracellular side of the membrane. Residues Y49–V69 form a helical membrane-spanning segment. The Cytoplasmic segment spans residues N70–P80. Residues F81–A101 form a helical membrane-spanning segment. Residues S102 to E137 are Extracellular-facing. Residues A138–G158 traverse the membrane as a helical segment. At Y159–V167 the chain is on the cytoplasmic side.

This sequence belongs to the Casparian strip membrane proteins (CASP) family. In terms of assembly, homodimer and heterodimers.

The protein localises to the cell membrane. This is CASP-like protein 3 from Osmunda lancea (Fern).